The sequence spans 513 residues: ATP synthase subunit alpha (513 aa).

G169–T176 provides a ligand contact to ATP.

The protein belongs to the ATPase alpha/beta chains family. F-type ATPases have 2 components, CF(1) - the catalytic core - and CF(0) - the membrane proton channel. CF(1) has five subunits: alpha(3), beta(3), gamma(1), delta(1), epsilon(1). CF(0) has three main subunits: a(1), b(2) and c(9-12). The alpha and beta chains form an alternating ring which encloses part of the gamma chain. CF(1) is attached to CF(0) by a central stalk formed by the gamma and epsilon chains, while a peripheral stalk is formed by the delta and b chains.

Its subcellular location is the cell inner membrane. The enzyme catalyses ATP + H2O + 4 H(+)(in) = ADP + phosphate + 5 H(+)(out). Produces ATP from ADP in the presence of a proton gradient across the membrane. The alpha chain is a regulatory subunit. This chain is ATP synthase subunit alpha, found in Klebsiella pneumoniae subsp. pneumoniae (strain ATCC 700721 / MGH 78578).